A 1381-amino-acid chain; its full sequence is Hepatocyte growth factor receptor (1381 aa).

The first 24 residues, Met-1–Gly-24, serve as a signal peptide directing secretion. Residues Glu-25–Thr-932 lie on the Extracellular side of the membrane. The region spanning Lys-27–Leu-515 is the Sema domain. Asn-45 carries N-linked (GlcNAc...) asparagine glycosylation. Disulfide bonds link Cys-95/Cys-101, Cys-98/Cys-160, Cys-133/Cys-141, and Cys-173/Cys-176. N-linked (GlcNAc...) asparagine glycosylation occurs at Asn-106. Asn-203 and Asn-359 each carry an N-linked (GlcNAc...) asparagine glycan. Cystine bridges form between Cys-299–Cys-364 and Cys-386–Cys-398. Residues Asn-400 and Asn-406 are each glycosylated (N-linked (GlcNAc...) asparagine). Cystine bridges form between Cys-520-Cys-538, Cys-526-Cys-561, Cys-529-Cys-545, and Cys-541-Cys-551. IPT/TIG domains follow at residues Pro-563–Val-655, Pro-657–Arg-739, and Pro-742–Val-836. Thr-582 carries an O-linked (Man) threonine glycan. Asn-607 and Asn-635 each carry an N-linked (GlcNAc...) asparagine glycan. Residues Thr-676 and Thr-761 are each glycosylated (O-linked (Man) threonine). N-linked (GlcNAc...) asparagine glycosylation is found at Asn-785, Asn-879, and Asn-930. A helical membrane pass occupies residues Gly-933 to Leu-955. Residues Lys-956 to Thr-1381 are Cytoplasmic-facing. Ser-966 carries the post-translational modification Phosphoserine. Phosphothreonine is present on Thr-977. Phosphoserine occurs at positions 990 and 997. Phosphotyrosine is present on Tyr-1003. In terms of domain architecture, Protein kinase spans Val-1078–Ile-1345. ATP is bound by residues Ile-1084–Val-1092 and Lys-1110. Asp-1204 functions as the Proton acceptor in the catalytic mechanism. An interaction with RANBP9 region spans residues Leu-1212–Thr-1381. Tyr-1230 is subject to Phosphotyrosine. 2 positions are modified to phosphotyrosine; by autocatalysis: Tyr-1234 and Tyr-1235. At Thr-1289 the chain carries Phosphothreonine. Residues Trp-1320 to Val-1359 form an interaction with MUC20 region. Tyr-1349 and Tyr-1356 each carry phosphotyrosine; by autocatalysis. Position 1365 is a phosphotyrosine (Tyr-1365).

This sequence belongs to the protein kinase superfamily. Tyr protein kinase family. Heterodimer made of an alpha chain (50 kDa) and a beta chain (145 kDa) which are disulfide linked. Binds PLXNB1. Interacts when phosphorylated with downstream effectors including STAT3, PIK3R1, SRC, PCLG1, GRB2 and GAB1. Interacts with SPSB1, SPSB2 and SPSB4. Interacts with INPP5D/SHIP1. When phosphorylated at Tyr-1356, interacts with INPPL1/SHIP2. Interacts with RANBP9 and RANBP10, as well as SPSB1, SPSB2, SPSB3 and SPSB4. SPSB1 binding occurs in the presence and in the absence of HGF, however HGF treatment has a positive effect on this interaction. Interacts with MUC20; prevents interaction with GRB2 and suppresses hepatocyte growth factor-induced cell proliferation. Interacts with GRB10. Interacts with PTPN1 and PTPN2. Interacts with HSP90AA1 and HSP90AB1; the interaction suppresses MET kinase activity. Interacts with tensin TNS3. Interacts (when phosphorylated) with tensin TNS4 (via SH2 domain); the interaction increases MET protein stability by inhibiting MET endocytosis and subsequent lysosomal degradation. Autophosphorylated in response to ligand binding on Tyr-1234 and Tyr-1235 in the kinase domain leading to further phosphorylation of Tyr-1349 and Tyr-1356 in the C-terminal multifunctional docking site. Dephosphorylated by PTPRJ at Tyr-1349 and Tyr-1365. Dephosphorylated by PTPN1 and PTPN2. In terms of processing, ubiquitinated. Ubiquitination by CBL regulates the receptor stability and activity through proteasomal degradation. Post-translationally, O-mannosylation of IPT/TIG domains by TMEM260 is required for protein maturation. O-mannosylated residues are composed of single mannose glycans that are not elongated or modified.

It localises to the membrane. It catalyses the reaction L-tyrosyl-[protein] + ATP = O-phospho-L-tyrosyl-[protein] + ADP + H(+). In its inactive state, the C-terminal tail interacts with the catalytic domain and inhibits the kinase activity. Upon ligand binding, the C-terminal tail is displaced and becomes phosphorylated, thus increasing the kinase activity. Its function is as follows. Receptor tyrosine kinase that transduces signals from the extracellular matrix into the cytoplasm by binding to hepatocyte growth factor/HGF ligand. Regulates many physiological processes including proliferation, scattering, morphogenesis and survival. Ligand binding at the cell surface induces autophosphorylation of MET on its intracellular domain that provides docking sites for downstream signaling molecules. Following activation by ligand, interacts with the PI3-kinase subunit PIK3R1, PLCG1, SRC, GRB2, STAT3 or the adapter GAB1. Recruitment of these downstream effectors by MET leads to the activation of several signaling cascades including the RAS-ERK, PI3 kinase-AKT, or PLCgamma-PKC. The RAS-ERK activation is associated with the morphogenetic effects while PI3K/AKT coordinates prosurvival effects. During embryonic development, MET signaling plays a role in gastrulation, development and migration of muscles and neuronal precursors, angiogenesis and kidney formation. In adults, participates in wound healing as well as organ regeneration and tissue remodeling. Also promotes differentiation and proliferation of hematopoietic cells. This Sus scrofa (Pig) protein is Hepatocyte growth factor receptor (MET).